The chain runs to 209 residues: Cytidylate kinase (209 aa).

Residue 7–15 participates in ATP binding; sequence GVAASGKSS.

Belongs to the cytidylate kinase family. Type 1 subfamily.

It localises to the cytoplasm. It catalyses the reaction CMP + ATP = CDP + ADP. The enzyme catalyses dCMP + ATP = dCDP + ADP. The chain is Cytidylate kinase from Deinococcus geothermalis (strain DSM 11300 / CIP 105573 / AG-3a).